We begin with the raw amino-acid sequence, 217 residues long: GTP cyclohydrolase-2 (217 aa).

GTP is bound at residue 50–54 (RIHSE). Zn(2+) contacts are provided by Cys55, Cys66, and Cys68. Residues Gln71, 93-95 (EGR), and Thr115 each bind GTP. Asp127 serves as the catalytic Proton acceptor. Residue Arg129 is the Nucleophile of the active site. Residues Thr150 and Lys155 each contribute to the GTP site.

It belongs to the GTP cyclohydrolase II family. The cofactor is Zn(2+).

The catalysed reaction is GTP + 4 H2O = 2,5-diamino-6-hydroxy-4-(5-phosphoribosylamino)-pyrimidine + formate + 2 phosphate + 3 H(+). It functions in the pathway cofactor biosynthesis; riboflavin biosynthesis; 5-amino-6-(D-ribitylamino)uracil from GTP: step 1/4. Its function is as follows. Catalyzes the conversion of GTP to 2,5-diamino-6-ribosylamino-4(3H)-pyrimidinone 5'-phosphate (DARP), formate and pyrophosphate. In Actinobacillus succinogenes (strain ATCC 55618 / DSM 22257 / CCUG 43843 / 130Z), this protein is GTP cyclohydrolase-2.